Reading from the N-terminus, the 86-residue chain is Large ribosomal subunit protein uL23 (86 aa).

The protein belongs to the universal ribosomal protein uL23 family. In terms of assembly, part of the 50S ribosomal subunit. Contacts protein L29.

Binds to 23S rRNA. One of the proteins that surrounds the polypeptide exit tunnel on the outside of the ribosome. The polypeptide is Large ribosomal subunit protein uL23 (Pyrococcus furiosus (strain ATCC 43587 / DSM 3638 / JCM 8422 / Vc1)).